A 61-amino-acid chain; its full sequence is Photosystem II reaction center protein K (61 aa).

Positions Met-1–Ala-24 are excised as a propeptide. A helical membrane pass occupies residues Ile-32 to Phe-52.

Belongs to the PsbK family. PSII is composed of 1 copy each of membrane proteins PsbA, PsbB, PsbC, PsbD, PsbE, PsbF, PsbH, PsbI, PsbJ, PsbK, PsbL, PsbM, PsbT, PsbX, PsbY, PsbZ, Psb30/Ycf12, at least 3 peripheral proteins of the oxygen-evolving complex and a large number of cofactors. It forms dimeric complexes. Detected in both etioplasts and green leaves; PSII is only assembled in green leaves.

It localises to the plastid. The protein resides in the chloroplast thylakoid membrane. One of the components of the core complex of photosystem II (PSII). PSII is a light-driven water:plastoquinone oxidoreductase that uses light energy to abstract electrons from H(2)O, generating O(2) and a proton gradient subsequently used for ATP formation. It consists of a core antenna complex that captures photons, and an electron transfer chain that converts photonic excitation into a charge separation. In Hordeum vulgare (Barley), this protein is Photosystem II reaction center protein K.